The following is a 900-amino-acid chain: Bifunctional uridylyltransferase/uridylyl-removing enzyme (900 aa).

The interval 1–342 (MPQVDPELFD…PCEQPVQIQP (342 aa)) is uridylyltransferase. The segment at 343-705 (LNSRFQLRDG…TTQREFESGS (363 aa)) is uridylyl-removing. The region spanning 461-583 (VDAHTLNLIK…VGDQTHLDYL (123 aa)) is the HD domain. ACT domains lie at 706–789 (QIFI…IIQR) and 816–891 (VLEV…DNGR).

Belongs to the GlnD family. It depends on Mg(2+) as a cofactor.

It carries out the reaction [protein-PII]-L-tyrosine + UTP = [protein-PII]-uridylyl-L-tyrosine + diphosphate. The enzyme catalyses [protein-PII]-uridylyl-L-tyrosine + H2O = [protein-PII]-L-tyrosine + UMP + H(+). Its activity is regulated as follows. Uridylyltransferase (UTase) activity is inhibited by glutamine, while glutamine activates uridylyl-removing (UR) activity. Modifies, by uridylylation and deuridylylation, the PII regulatory proteins (GlnB and homologs), in response to the nitrogen status of the cell that GlnD senses through the glutamine level. Under low glutamine levels, catalyzes the conversion of the PII proteins and UTP to PII-UMP and PPi, while under higher glutamine levels, GlnD hydrolyzes PII-UMP to PII and UMP (deuridylylation). Thus, controls uridylylation state and activity of the PII proteins, and plays an important role in the regulation of nitrogen assimilation and metabolism. The chain is Bifunctional uridylyltransferase/uridylyl-removing enzyme from Pseudomonas aeruginosa (strain ATCC 15692 / DSM 22644 / CIP 104116 / JCM 14847 / LMG 12228 / 1C / PRS 101 / PAO1).